Here is a 431-residue protein sequence, read N- to C-terminus: Glutamate--tRNA ligase 1 (431 aa).

Residues 6–16 (PSPTGDMHIGN) carry the 'HIGH' region motif. The 'KMSKS' region signature appears at 235 to 239 (KMSKR). K238 is an ATP binding site.

The protein belongs to the class-I aminoacyl-tRNA synthetase family. Glutamate--tRNA ligase type 1 subfamily. Monomer.

The protein resides in the cytoplasm. The enzyme catalyses tRNA(Glu) + L-glutamate + ATP = L-glutamyl-tRNA(Glu) + AMP + diphosphate. In terms of biological role, catalyzes the attachment of glutamate to tRNA(Glu) in a two-step reaction: glutamate is first activated by ATP to form Glu-AMP and then transferred to the acceptor end of tRNA(Glu). This is Glutamate--tRNA ligase 1 from Campylobacter jejuni subsp. jejuni serotype O:23/36 (strain 81-176).